Reading from the N-terminus, the 343-residue chain is Methionine import ATP-binding protein MetN (343 aa).

An ABC transporter domain is found at 2–241 (IKLSNITKVF…PKTPLAQKFI (240 aa)). 38 to 45 (GASGAGKS) is a binding site for ATP.

The protein belongs to the ABC transporter superfamily. Methionine importer (TC 3.A.1.24) family. The complex is composed of two ATP-binding proteins (MetN), two transmembrane proteins (MetI) and a solute-binding protein (MetQ).

The protein localises to the cell inner membrane. It carries out the reaction L-methionine(out) + ATP + H2O = L-methionine(in) + ADP + phosphate + H(+). The enzyme catalyses D-methionine(out) + ATP + H2O = D-methionine(in) + ADP + phosphate + H(+). In terms of biological role, part of the ABC transporter complex MetNIQ involved in methionine import. Responsible for energy coupling to the transport system. The polypeptide is Methionine import ATP-binding protein MetN (Shigella boydii serotype 4 (strain Sb227)).